Reading from the N-terminus, the 103-residue chain is Co-chaperonin GroES (103 aa).

The protein belongs to the GroES chaperonin family. In terms of assembly, heptamer of 7 subunits arranged in a ring. Interacts with the chaperonin GroEL.

Its subcellular location is the cytoplasm. Together with the chaperonin GroEL, plays an essential role in assisting protein folding. The GroEL-GroES system forms a nano-cage that allows encapsulation of the non-native substrate proteins and provides a physical environment optimized to promote and accelerate protein folding. GroES binds to the apical surface of the GroEL ring, thereby capping the opening of the GroEL channel. This chain is Co-chaperonin GroES, found in Prochlorococcus marinus (strain MIT 9312).